Consider the following 209-residue polypeptide: Uracil phosphoribosyltransferase (209 aa).

5-phospho-alpha-D-ribose 1-diphosphate contacts are provided by residues Arg-79, Arg-104, and 131-139; that span reads DPMLATGGS. Uracil contacts are provided by residues Ile-194 and 199-201; that span reads GDA. Position 200 (Asp-200) interacts with 5-phospho-alpha-D-ribose 1-diphosphate.

It belongs to the UPRTase family. Mg(2+) is required as a cofactor.

The enzyme catalyses UMP + diphosphate = 5-phospho-alpha-D-ribose 1-diphosphate + uracil. The protein operates within pyrimidine metabolism; UMP biosynthesis via salvage pathway; UMP from uracil: step 1/1. With respect to regulation, allosterically activated by GTP. Catalyzes the conversion of uracil and 5-phospho-alpha-D-ribose 1-diphosphate (PRPP) to UMP and diphosphate. This is Uracil phosphoribosyltransferase from Citrifermentans bemidjiense (strain ATCC BAA-1014 / DSM 16622 / JCM 12645 / Bem) (Geobacter bemidjiensis).